We begin with the raw amino-acid sequence, 672 residues long: Forkhead box protein O3 (672 aa).

Disordered regions lie at residues 1 to 85 and 110 to 152; these read MAEA…GVSS and GPAS…CSSR. S30 is modified (phosphoserine). Residue T32 is modified to Phosphothreonine. K46 is modified (N6-methyllysine). A compositionally biased stretch (acidic residues) spans 57-68; sequence IPEEDDDEDDED. The required for mitochondrial import stretch occupies residues 80–108; the sequence is GGGVSSTLGSGLLLEDSAMLLAPGGQDLG. The segment covering 110–129 has biased composition (low complexity); it reads GPASAAGALSGGTPTQLQPQ. The residue at position 148 (K148) is an N6-methyllysine. The segment at residues 156-250 is a DNA-binding region (fork-head); sequence WGNLSYADLI…KSGKAPRRRA (95 aa). The residue at position 178 (T178) is a Phosphothreonine. Residues S208 and S214 each carry the phosphoserine modification. Residue K229 is modified to N6-methyllysine. A disordered region spans residues 230–301; it reads SSWWIINPDG…GSPTSRSSDE (72 aa). Residue K241 is modified to N6-acetyllysine. The Nuclear localization signal motif lies at 241 to 258; that stretch reads KSGKAPRRRAVSMDNSNK. A Phosphoserine modification is found at S252. A compositionally biased stretch (basic residues) spans 260-271; it reads TKSRGRAAKKKA. K261 and K270 each carry N6-methyllysine. 2 positions are modified to phosphoserine: S279 and S283. The segment covering 282–297 has biased composition (polar residues); the sequence is DSPSQLSKWPGSPTSR. The residue at position 289 (K289) is an N6-methyllysine. Residue S293 is modified to Phosphoserine. The residue at position 298 (S298) is a Phosphoserine; by CaMK2A. Residues 299-672 form a mediates interaction with CHUK/IKKA and IKBKB/IKKB region; it reads SDELDAWTDF…QASSQSWVPG (374 aa). Residue S310 is modified to Phosphoserine. At S314 the chain carries Phosphoserine; by SGK1. S398 and S412 each carry phosphoserine; by AMPK. Disordered regions lie at residues 399–441 and 535–583; these read QPSP…SLNS and HQHQ…QTLS. Polar residues-rich tracts occupy residues 409 to 441 and 548 to 577; these read RGSSFPYTAKSSGLGSPTGSFNSTVFGPSSLNS and ALSNSVSNMGLSDSSSLGSAKHQQQSPASQ. K418 is subject to N6-methyllysine. S420 carries the phosphoserine modification. S550 is subject to Phosphoserine; by MAPKAPK5. S554 bears the Phosphoserine; by AMPK and MAPKAPK5 mark. Phosphoserine; by AMPK occurs at positions 587 and 625. The residue at position 643 (S643) is a Phosphoserine; by IKKB.

In terms of assembly, upon metabolic stress, forms a complex composed of FOXO3, SIRT3 and mitochondrial RNA polymerase POLRMT; the complex is recruited to mtDNA in a SIRT3-dependent manner. Also forms a complex composed of FOXO3, SIRT3, TFAM and POLRMT. Interacts with SIRT2; the interaction occurs independently of SIRT2 deacetylase activity. Interacts with YWHAB/14-3-3-beta and YWHAZ/14-3-3-zeta, which are required for cytosolic sequestration. Upon oxidative stress, interacts with STK4/MST1, which disrupts interaction with YWHAB/14-3-3-beta and leads to nuclear translocation. Interacts with PIM1. Interacts with DDIT3/CHOP. Interacts (deacetylated form) with SKP2. Interacts with CHUK and IKBKB. Interacts with CAMK2A, CAMK2B and calcineurin A. Interacts with NUPR1; this interaction represses FOXO3 transactivation. In terms of processing, deacetylation by SIRT1 or SIRT2 stimulates interaction of FOXO3 with SKP2 and facilitates SCF(SKP2)-mediated FOXO3 ubiquitination and proteasomal degradation. Deacetylation by SIRT2 stimulates FOXO3-mediated transcriptional activity in response to oxidative stress. Deacetylated by SIRT3. Deacetylation by SIRT3 stimulates FOXO3-mediated mtDNA transcriptional activity in response to metabolic stress. Post-translationally, in the presence of survival factors such as IGF1, phosphorylated on Thr-32 and Ser-252 by AKT1/PKB. This phosphorylated form then interacts with 14-3-3 proteins and is retained in the cytoplasm. Survival factor withdrawal induces dephosphorylation and promotes translocation to the nucleus where the dephosphorylated protein induces transcription of target genes and triggers apoptosis. Although AKT1/PKB doesn't appear to phosphorylate Ser-314 directly, it may activate other kinases that trigger phosphorylation at this residue. Phosphorylated by STK4/MST1 on Ser-208 upon oxidative stress, which leads to dissociation from YWHAB/14-3-3-beta and nuclear translocation. Phosphorylated by PIM1. Phosphorylation by AMPK leads to the activation of transcriptional activity without affecting subcellular localization. Phosphorylated by AMPK on Ser-30 in response to metabolic stress which mediates FOXO3 mitochondrial translocation. Phosphorylation by MAPKAPK5 promotes nuclear localization and DNA-binding, leading to induction of miR-34b and miR-34c expression, 2 post-transcriptional regulators of MYC that bind to the 3'UTR of MYC transcript and prevent its translation. Phosphorylated by CHUK/IKKA and IKBKB/IKKB. TNF-induced inactivation of FOXO3 requires its phosphorylation at Ser-643 by IKBKB/IKKB which promotes FOXO3 retention in the cytoplasm, polyubiquitination and ubiquitin-mediated proteasomal degradation. May be dephosphorylated by calcineurin A on Ser-298 which abolishes FOXO3 transcriptional activity. Phosphorylation at Ser-252 promotes its degradation by the proteasome. Dephosphorylation at Ser-252 by protein phosphatase 2A (PPP2CA) promotes its stabilization; interaction with PPP2CA is enhanced by AMBRA1. Heavily methylated by SET9 which decreases stability, while moderately increasing transcriptional activity. The main methylation site is Lys-270. Methylation doesn't affect subcellular location. In terms of processing, polyubiquitinated. Ubiquitinated by a SCF complex containing SKP2, leading to proteasomal degradation. Post-translationally, the N-terminus is cleaved following import into the mitochondrion. In terms of tissue distribution, expressed in white and brown adipose tissues (at protein level). Expressed in liver, kidney, lung and colon (at protein level). Expressed in skeletal muscles (at protein level).

Its subcellular location is the cytoplasm. It localises to the cytosol. It is found in the nucleus. The protein resides in the mitochondrion matrix. The protein localises to the mitochondrion outer membrane. Transcriptional activator that recognizes and binds to the DNA sequence 5'-[AG]TAAA[TC]A-3' and regulates different processes, such as apoptosis and autophagy. Acts as a positive regulator of autophagy in skeletal muscle: in starved cells, enters the nucleus following dephosphorylation and binds the promoters of autophagy genes, such as GABARAP1L, MAP1LC3B and ATG12, thereby activating their expression, resulting in proteolysis of skeletal muscle proteins. Triggers apoptosis in the absence of survival factors, including neuronal cell death upon oxidative stress. Participates in post-transcriptional regulation of MYC: following phosphorylation by MAPKAPK5, promotes induction of miR-34b and miR-34c expression, 2 post-transcriptional regulators of MYC that bind to the 3'UTR of MYC transcript and prevent its translation. In response to metabolic stress, translocates into the mitochondria where it promotes mtDNA transcription. Also acts as a key regulator of chondrogenic commitment of skeletal progenitor cells in response to lipid availability: when lipids levels are low, translocates to the nucleus and promotes expression of SOX9, which induces chondrogenic commitment and suppresses fatty acid oxidation. Also acts as a key regulator of regulatory T-cells (Treg) differentiation by activating expression of FOXP3. The sequence is that of Forkhead box protein O3 from Mus musculus (Mouse).